The sequence spans 205 residues: Large ribosomal subunit protein bL25 (205 aa).

The segment at Pro-185 to Ala-205 is disordered. Residues Ala-186–Ala-205 show a composition bias toward low complexity.

This sequence belongs to the bacterial ribosomal protein bL25 family. CTC subfamily. In terms of assembly, part of the 50S ribosomal subunit; part of the 5S rRNA/L5/L18/L25 subcomplex. Contacts the 5S rRNA. Binds to the 5S rRNA independently of L5 and L18.

In terms of biological role, this is one of the proteins that binds to the 5S RNA in the ribosome where it forms part of the central protuberance. The chain is Large ribosomal subunit protein bL25 from Cupriavidus taiwanensis (strain DSM 17343 / BCRC 17206 / CCUG 44338 / CIP 107171 / LMG 19424 / R1) (Ralstonia taiwanensis (strain LMG 19424)).